The chain runs to 435 residues: Zinc finger CCCH domain-containing protein 67 (435 aa).

Positions 1–91 (MSKPEETSDP…DQKEEEEGSE (91 aa)) are disordered. 3 consecutive C3H1-type zinc fingers follow at residues 101–129 (RPDS…HPVR), 148–176 (NPKL…HMKE), and 194–222 (RPGE…HPDP). Residues 235 to 274 (GNNGGSFSPKAPSQASSTSWSSTRHMNGTGTAPFIPSMFP) are disordered. The span at 247-256 (SQASSTSWSS) shows a compositional bias: low complexity. 2 consecutive C3H1-type zinc fingers follow at residues 334-362 (RPDQ…HPKN) and 380-408 (RPDQ…HSIP). Residues 412–435 (SPSSSQTVEARQVGANGNEDDSWH) are disordered.

It localises to the nucleus. This chain is Zinc finger CCCH domain-containing protein 67, found in Arabidopsis thaliana (Mouse-ear cress).